The chain runs to 423 residues: MKIKILSTGDEIVSGGVVDTNASWLAASLLGLGLTVDCFVAVGDDFGTLRRTIADLAAETDILIVTGGLGPTNDDITAEAAAGAVNTKTILNPEALGLVTDYFNRKGWPMNPSNKKQAVLPRDCRVIENEVGTAPGFYLRISGCHGFFMPGVPKEMKAMTLNWVLPWIQRYAAKNLGRTLTDITPRTITVFGLPESEVGARLKDLATQFPGVRPGFRADFPLIQVKLYPDSEKRGGGENILDQAEQFVVTTLGRWVISREGLTMEQEVGRLLVQKKATIALAESCTGGLMASMLTDVPGSSEYFIFSGVTYSNEAKIRVLGVRQSTLESHGAVSEETAGEMAQGVRRLTQATYGISTSGVAGPGGGSPEKPVGMVCIGIAGPGFCTTKRYGFAFNDRTMNKQIFAVTALGALRKRMLMQGGSV.

It belongs to the CinA family.

The polypeptide is CinA-like protein (Desulforapulum autotrophicum (strain ATCC 43914 / DSM 3382 / VKM B-1955 / HRM2) (Desulfobacterium autotrophicum)).